The following is a 300-amino-acid chain: Glutamyl-Q tRNA(Asp) synthetase (300 aa).

L-glutamate is bound by residues 14-18 and glutamate 50; that span reads RFAPT. Residues 17-27 carry the 'HIGH' region motif; that stretch reads PTPSGFLHFGS. 4 residues coordinate Zn(2+): cysteine 106, cysteine 108, tyrosine 120, and cysteine 124. Tyrosine 177 and arginine 195 together coordinate L-glutamate. Residues 233-237 carry the 'KMSKS' region motif; sequence KLGKS. Lysine 236 contributes to the ATP binding site.

It belongs to the class-I aminoacyl-tRNA synthetase family. GluQ subfamily. The cofactor is Zn(2+).

In terms of biological role, catalyzes the tRNA-independent activation of glutamate in presence of ATP and the subsequent transfer of glutamate onto a tRNA(Asp). Glutamate is transferred on the 2-amino-5-(4,5-dihydroxy-2-cyclopenten-1-yl) moiety of the queuosine in the wobble position of the QUC anticodon. The polypeptide is Glutamyl-Q tRNA(Asp) synthetase (Pseudomonas putida (strain ATCC 700007 / DSM 6899 / JCM 31910 / BCRC 17059 / LMG 24140 / F1)).